We begin with the raw amino-acid sequence, 297 residues long: Mitochondrial thiamine pyrophosphate carrier 1 (297 aa).

3 Solcar repeats span residues 13 to 94, 102 to 195, and 196 to 295; these read SHVF…TNAA, PPTI…IRAR, and WPET…LMRV. The next 6 membrane-spanning stretches (helical) occupy residues 19–36, 75–91, 109–128, 163–187, 203–219, and 270–287; these read LVSGAIAGLAARSAIAPL, IMYIIYGSVQFGTYSYT, LAGAITGMASSLCSYPFDVL, GLGGFFHGVATSMANVTVSTAAMFG, TAGAISGVISRTITFPL, and GIGLGLLKSVPNTAINLW.

Belongs to the mitochondrial carrier (TC 2.A.29) family.

The protein resides in the mitochondrion inner membrane. Its function is as follows. Mitochondrial transporter that mediates uptake of thiamine pyrophosphate (ThPP) into mitochondria. This Vanderwaltozyma polyspora (strain ATCC 22028 / DSM 70294 / BCRC 21397 / CBS 2163 / NBRC 10782 / NRRL Y-8283 / UCD 57-17) (Kluyveromyces polysporus) protein is Mitochondrial thiamine pyrophosphate carrier 1 (TPC1).